Consider the following 88-residue polypeptide: Mitochondrial import inner membrane translocase subunit Tim10 (88 aa).

Positions 25 to 49 (CSAKCISKYNEGDLNVGESVCAERC) match the Twin CX3C motif motif. 2 cysteine pairs are disulfide-bonded: cysteine 25–cysteine 49 and cysteine 29–cysteine 45. Residues 63–88 (KMSGTQPGQEVPQEAPAAAPEKKGWF) are disordered. Residues 68-81 (QPGQEVPQEAPAAA) are compositionally biased toward low complexity.

Belongs to the small Tim family. As to quaternary structure, heterohexamer; composed of 3 copies of timm9 and 3 copies of timm10, named soluble 70 kDa complex. Associates directly with the TIM22 complex, whose core is composed of timm22. Interacts with the transmembrane regions of multi-pass transmembrane proteins in transit.

The protein localises to the mitochondrion inner membrane. In terms of biological role, component of the TIM22 complex, a complex that mediates the import and insertion of multi-pass transmembrane proteins into the mitochondrial inner membrane. The TIM22 complex forms a twin-pore translocase that uses the membrane potential as external driving force. The sequence is that of Mitochondrial import inner membrane translocase subunit Tim10 (timm10) from Dictyostelium discoideum (Social amoeba).